The sequence spans 442 residues: Ribosomal protein uS12 methylthiotransferase RimO (442 aa).

Residues 13 to 129 (RSIFLLSLGC…ILNILGTAYD (117 aa)) form the MTTase N-terminal domain. Positions 22, 58, 92, 153, 157, and 160 each coordinate [4Fe-4S] cluster. The region spanning 139 to 369 (LSPSHYAWLK…MELQEGISEK (231 aa)) is the Radical SAM core domain. Positions 372-439 (RALEEKALKV…AYELVGRIKN (68 aa)) constitute a TRAM domain.

Belongs to the methylthiotransferase family. RimO subfamily. [4Fe-4S] cluster serves as cofactor.

The protein resides in the cytoplasm. The enzyme catalyses L-aspartate(89)-[ribosomal protein uS12]-hydrogen + (sulfur carrier)-SH + AH2 + 2 S-adenosyl-L-methionine = 3-methylsulfanyl-L-aspartate(89)-[ribosomal protein uS12]-hydrogen + (sulfur carrier)-H + 5'-deoxyadenosine + L-methionine + A + S-adenosyl-L-homocysteine + 2 H(+). Its function is as follows. Catalyzes the methylthiolation of an aspartic acid residue of ribosomal protein uS12. This is Ribosomal protein uS12 methylthiotransferase RimO from Chlorobium phaeobacteroides (strain BS1).